A 794-amino-acid polypeptide reads, in one-letter code: Zinc finger and BTB domain-containing protein 17 (794 aa).

The region spanning 1 to 104 (MDFPQHSQRV…VASFLQMQDI (104 aa)) is the BTB domain. A disordered region spans residues 116–285 (EPSSTTGESA…QNLRSGTYGD (170 aa)). Over residues 132–142 (GGDKRAKDEKA) the composition is skewed to basic and acidic residues. A compositionally biased stretch (low complexity) spans 203-216 (SSMAAAEAEALSES). Over residues 243–252 (VKEEGMHLDN) the composition is skewed to basic and acidic residues. The segment covering 254 to 263 (EPPEENEESA) has biased composition (acidic residues). The interaction with MYC stretch occupies residues 260–299 (EESAGTDSGQELGMEGQNLRSGTYGDRTESKAYGSIIHKC). 13 consecutive C2H2-type zinc fingers follow at residues 297-319 (HKCE…IRIH), 325-347 (FSCR…EKTH), 353-375 (YGCE…KKRH), 381-403 (YRCG…QLVH), 409-431 (YQCD…LETH), 437-459 (HKCP…LKIH), 465-487 (LKCR…LRIH), 493-515 (YVCT…VRIH), 519-543 (KPCQ…VRQH), 549-571 (YVCE…IRHH), 577-599 (HKCS…IIIH), 605-628 (YLCD…KTVH), and 708-730 (YACD…VRIH). A Glycyl lysine isopeptide (Lys-Gly) (interchain with G-Cter in ubiquitin) cross-link involves residue Lys388. Lys472 participates in a covalent cross-link: Glycyl lysine isopeptide (Lys-Gly) (interchain with G-Cter in ubiquitin). Residues 628 to 709 (HQGKAGIKIL…EDPNTHILYA (82 aa)) form an interaction with MYC region. Residues 628–794 (HQGKAGIKIL…TAPDCLPPAE (167 aa)) form an interaction with HCFC1 region. The interval 769–794 (PRDGTEGQPTLAESPPTAPDCLPPAE) is disordered. The segment covering 784–794 (PTAPDCLPPAE) has biased composition (pro residues).

It belongs to the krueppel C2H2-type zinc-finger protein family. In terms of assembly, homooligomerizes (via the BTB/POZ domain), multimerization is required for DNA binding. Binds to the C-terminal helix-loop-helix motif of MYC which inhibits ZBTB17 transactivation and growth arrest activities and renders it insoluble in the nucleus. Also interacts with HCFC1, MAGEA4 and TMPRSS11A. Interacts (via the C-terminal zinc fingers) with GFI1; the interaction results in the recruitment of MYC to the CDKN1A/p21 and CDKN1B promoters and repression of transcription. Interacts with TRAF2, interfering with the binding of UBC13 to TRAF2, and inhibiting TRAF2 E3 ligase activity. Interacts with BCL6; the interaction inhibits ZBTB17 transactivation activity on target genes involved in cell cycle arrest. Interacts with ZBTB49; this interaction blocks ZBTB17-mediated repression of RB1. Undergoes 'Lys-48'-linked polyubiquitination at Lys-388 and Lys-472 and subsequent proteasomal degradation in a TRAF2-dependent manner and upon TNFA stimulation. As to expression, found in all the embryonic and adult tissues examined.

It is found in the nucleus. Transcription factor that can function as an activator or repressor depending on its binding partners, and by targeting negative regulators of cell cycle progression. Has been shown to bind to the promoters of adenovirus major late protein and cyclin D1 and activate transcription. Required for early embryonic development during gastrulation. Plays a critical role in early lymphocyte development, where it is essential to prevent apoptosis in lymphoid precursors, allowing them to survive in response to IL7 and undergo proper lineage commitment. Represses RB1 transcription; this repression can be blocked by interaction with ZBTB49. This Mus musculus (Mouse) protein is Zinc finger and BTB domain-containing protein 17 (Zbtb17).